The primary structure comprises 185 residues: Ribosome-recycling factor (185 aa).

A disordered region spans residues 144-164 (KEGEAGEDEVGRAEKDLDKTT).

Belongs to the RRF family.

It is found in the cytoplasm. In terms of biological role, responsible for the release of ribosomes from messenger RNA at the termination of protein biosynthesis. May increase the efficiency of translation by recycling ribosomes from one round of translation to another. This chain is Ribosome-recycling factor, found in Mycobacterium tuberculosis (strain CDC 1551 / Oshkosh).